Here is a 362-residue protein sequence, read N- to C-terminus: Glutamate 5-kinase (362 aa).

K3 serves as a coordination point for ATP. 3 residues coordinate substrate: S43, D128, and N140. Residues 160 to 161 (TD) and 202 to 208 (TGGMRTK) contribute to the ATP site. A PUA domain is found at 267 to 348 (AGAILVDAGA…RDIENVLGYS (82 aa)).

It belongs to the glutamate 5-kinase family.

The protein resides in the cytoplasm. The catalysed reaction is L-glutamate + ATP = L-glutamyl 5-phosphate + ADP. It functions in the pathway amino-acid biosynthesis; L-proline biosynthesis; L-glutamate 5-semialdehyde from L-glutamate: step 1/2. Its function is as follows. Catalyzes the transfer of a phosphate group to glutamate to form L-glutamate 5-phosphate. The polypeptide is Glutamate 5-kinase (Xanthomonas oryzae pv. oryzae (strain MAFF 311018)).